The chain runs to 434 residues: Septin-7 (434 aa).

Tyr-27 carries the phosphotyrosine modification. One can recognise a Septin-type G domain in the interval 44–313; the sequence is RGFEFTLMVV…ENYRSRKLAA (270 aa). An interaction with SEPTIN12 region spans residues 44-314; it reads RGFEFTLMVV…NYRSRKLAAV (271 aa). Positions 54–61 are G1 motif; it reads GESGLGKS. 54-61 is a binding site for GTP; sequence GESGLGKS. Ser-74 bears the Phosphoserine mark. GTP is bound by residues Thr-87, Gly-113, and 192-200; that span reads KADTLTPEE. The interval 110–113 is G3 motif; that stretch reads DTPG. Positions 191–194 are G4 motif; the sequence is AKAD. A Phosphothreonine modification is found at Thr-225. Residues Gly-247 and Arg-262 each coordinate GTP. Residues 329-434 are a coiled coil; it reads TKSPLAQMEE…EKNKKKGKIF (106 aa). The residue at position 331 (Ser-331) is a Phosphoserine. Lys-370 bears the N6-acetyllysine mark. Residues 377–407 are compositionally biased toward basic and acidic residues; sequence QRRHEQMKKNLEAQHKGLEEKRRQFEDEKAN. Residues 377–434 form a disordered region; it reads QRRHEQMKKNLEAQHKGLEEKRRQFEDEKANWEAQQRILEQQNSSRTLEKNKKKGKIF. Ser-421 carries the post-translational modification Phosphoserine. Thr-423 bears the Phosphothreonine mark.

It belongs to the TRAFAC class TrmE-Era-EngA-EngB-Septin-like GTPase superfamily. Septin GTPase family. As to quaternary structure, septins polymerize into heterooligomeric protein complexes that form filaments, and associate with cellular membranes, actin filaments and microtubules. GTPase activity is required for filament formation. Filaments are assembled from asymmetrical heterotrimers, composed of SEPTIN2, SEPTIN6 and SEPTIN7 that associate head-to-head to form a hexameric unit. Within the trimer, directly interacts with SEPTIN6, while interaction with SEPTIN2 seems indirect. In the absence of SEPTIN6, forms homodimers. Interacts directly with CENPE and links CENPE to septin filaments composed of SEPTIN2, SEPTIN6 and SEPTIN7. Interacts with SEPTIN5, SEPTIN8, SEPTIN9 and SEPTIN11. Component of a septin core octameric complex consisting of SEPTIN12, SEPTIN7, SEPTIN6 and SEPTIN2 or SEPTIN4 in the order 12-7-6-2-2-6-7-12 or 12-7-6-4-4-6-7-12 and located in the sperm annulus; the SEPTIN12:SEPTIN7 association is mediated by the respective GTP-binding domains.

Its subcellular location is the cytoplasm. The protein localises to the chromosome. It is found in the centromere. The protein resides in the kinetochore. It localises to the cytoskeleton. Its subcellular location is the spindle. The protein localises to the cleavage furrow. It is found in the midbody. The protein resides in the cilium axoneme. It localises to the cell projection. Its subcellular location is the cilium. The protein localises to the flagellum. Filament-forming cytoskeletal GTPase. Required for normal organization of the actin cytoskeleton. Required for normal progress through mitosis. Involved in cytokinesis. Required for normal association of CENPE with the kinetochore. Plays a role in ciliogenesis and collective cell movements. Forms a filamentous structure with SEPTIN12, SEPTIN6, SEPTIN2 and probably SEPTIN4 at the sperm annulus which is required for the structural integrity and motility of the sperm tail during postmeiotic differentiation. This is Septin-7 from Pan troglodytes (Chimpanzee).